The primary structure comprises 90 residues: Probable Fe(2+)-trafficking protein (90 aa).

It belongs to the Fe(2+)-trafficking protein family.

In terms of biological role, could be a mediator in iron transactions between iron acquisition and iron-requiring processes, such as synthesis and/or repair of Fe-S clusters in biosynthetic enzymes. The polypeptide is Probable Fe(2+)-trafficking protein (Laribacter hongkongensis (strain HLHK9)).